A 34-amino-acid polypeptide reads, in one-letter code: Unknown protein 5 (34 aa).

The polypeptide is Unknown protein 5 (Pseudotsuga menziesii (Douglas-fir)).